We begin with the raw amino-acid sequence, 101 residues long: Urease subunit beta (101 aa).

Belongs to the urease beta subunit family. Heterotrimer of UreA (gamma), UreB (beta) and UreC (alpha) subunits. Three heterotrimers associate to form the active enzyme.

The protein localises to the cytoplasm. It carries out the reaction urea + 2 H2O + H(+) = hydrogencarbonate + 2 NH4(+). It participates in nitrogen metabolism; urea degradation; CO(2) and NH(3) from urea (urease route): step 1/1. The polypeptide is Urease subunit beta (Pseudomonas fluorescens (strain ATCC BAA-477 / NRRL B-23932 / Pf-5)).